The following is a 387-amino-acid chain: MGHPPVSPSAPAPAGTTAIPGLIPDLVAGTPWPRWALIAGALAAGVLLVSCLLCAACCCCRRHRKKPRDKESVGLGSARGTTTTHLVQPDVDGLESSPGDAQQWGCLQLSLEFDFGSQEIRVGLRQAADLRPGGTVDPYARVSVSTQAGHRHETKVHRGTLCPVFDETCCFHIPQAELPGATLQVQLFNFKRFSGHEPLGELRLPLGTVDLQHVLEHWYLLGPPAATQPEQVGELCFSLRYVPSSGRLTVVVLEARGLRPGLAEPYVKVQLMLNQRKWKKRKTATKKGTAAPYFNEAFTFLVPFSQVQNVDLVLAVWDRSLPLRTEPVGKVHLGARASGQPLQHWADMLAHARRPIAQRHPLRPAREVDRMLALQPRLRLRLPLPHS.

At 1–34 the chain is on the extracellular side; it reads MGHPPVSPSAPAPAGTTAIPGLIPDLVAGTPWPR. A helical; Signal-anchor for type III membrane protein transmembrane segment spans residues 35–55; the sequence is WALIAGALAAGVLLVSCLLCA. At 56-387 the chain is on the cytoplasmic side; sequence ACCCCRRHRK…LRLRLPLPHS (332 aa). The tract at residues 70–99 is disordered; it reads KESVGLGSARGTTTTHLVQPDVDGLESSPG. 2 C2 domains span residues 103 to 219 and 231 to 346; these read QWGC…EHWY and QVGE…QHWA.

The protein belongs to the synaptotagmin family. Homodimer or homooligomer. Homodimerization and homooligomerization do not depend on Ca(2+). Interacts with SYNCRIP isoform 2 C-terminus. Binds inositol 1,3,4,5-tetrakisphosphate (IP4). Binds to AP2 in a Ca(2+)-independent manner. Interacts with STX1A, STX1B and STX2; the interaction is Ca(2+)-dependent.

The protein resides in the cell membrane. It localises to the cytoplasmic vesicle. Its subcellular location is the secretory vesicle. The protein localises to the acrosome. In terms of biological role, involved in the trafficking and exocytosis of secretory vesicles in non-neuronal tissues. Mediates Ca(2+)-regulation of exocytosis acrosomal reaction in sperm. May mediate Ca(2+)-regulation of exocytosis in insulin secreted cells. The chain is Synaptotagmin-8 (SYT8) from Homo sapiens (Human).